A 911-amino-acid chain; its full sequence is Alpha-actinin-4 (911 aa).

The segment at 1 to 269 (MVDYHAANQS…YVSSFYHAFS (269 aa)) is actin-binding. An interaction with VCL region spans residues 12–26 (QYGPSSAGNGAGGGG). Phosphotyrosine is present on Y31. The interaction with VCL stretch occupies residues 40–61 (RDLLLDPAWEKQQRKTFTAWCN). Calponin-homology (CH) domains follow at residues 50–154 (KQQR…LRFA) and 163–269 (TSAK…HAFS). Residues 84–88 (LMLLL) carry the LXXLL motif motif. The tract at residues 108-126 (KINNVNKALDFIASKGVKL) is interaction with VCL. K114 bears the N6-acetyllysine mark. The segment at 177–192 (TAPYKNVNVQNFHISW) is polyphosphoinositide (PIP2)-binding. N6-acetyllysine is present on K214. Position 249 is a phosphothreonine (T249). Spectrin repeat units follow at residues 293–403 (HLME…WLLN), 413–518 (HLAE…ALEK), 528–639 (QLHL…ALLE), and 649–752 (HLRR…EVEN). N6-acetyllysine is present on residues K592 and K625. Phosphoserine is present on S696. The segment at 736-911 (WEQLLTTIAR…STALYGESDL (176 aa)) is mediates interaction with MICALL2. 2 EF-hand domains span residues 765–800 (EQMQ…LGYD) and 806–841 (QGEA…ETTD). Residue D778 participates in Ca(2+) binding. The residue at position 779 (K779) is an N6-acetyllysine. Ca(2+) contacts are provided by D780 and E789. Position 859 is an N6-acetyllysine (K859). The residue at position 909 (S909) is a Phosphoserine.

This sequence belongs to the alpha-actinin family. In terms of assembly, homodimer; antiparallel. Binds TRIM3 at the N-terminus. Interacts with MICALL2 (preferentially in opened conformation); stimulated by RAB13 activation. Identified in a complex with CASK, IQGAP1, MAGI2, NPHS1, SPTAN1 and SPTBN1. Identified in a IGF2BP1-dependent mRNP granule complex containing untranslated mRNAs. Component of the CART complex, at least composed of ACTN4, HGS/HRS, MYO5B and TRIM3. Interacts with MAGI1. Interacts with PDLIM2. Interacts with PPARG and RARA. Binds to VCL; this interaction triggers VCL conformational changes. Interacts with SEPTIN14. Interacts with IGSF8. As to expression, widely expressed.

It localises to the nucleus. The protein localises to the cytoplasm. It is found in the cell junction. Its subcellular location is the cytoskeleton. The protein resides in the stress fiber. It localises to the perinuclear region. In terms of biological role, F-actin cross-linking protein which is thought to anchor actin to a variety of intracellular structures. This is a bundling protein. Probably involved in vesicular trafficking via its association with the CART complex. The CART complex is necessary for efficient transferrin receptor recycling but not for EGFR degradation. Involved in tight junction assembly in epithelial cells probably through interaction with MICALL2. Links MICALL2 to the actin cytoskeleton and recruits it to the tight junctions. May also function as a transcriptional coactivator, stimulating transcription mediated by the nuclear hormone receptors PPARG and RARA. Association with IGSF8 regulates the immune synapse formation and is required for efficient T-cell activation. In Homo sapiens (Human), this protein is Alpha-actinin-4.